Here is a 299-residue protein sequence, read N- to C-terminus: MAKIVECIPNFSEGQNQAVIDGLVATAKSIPGVTLLDYSSDASHNRSVFTLVGDDQSIQEAAFQLVKYASENIDMTKHHGEHPRMGATDVCPFVPIKDITTQECVEISKQVAERINRELGIPIFLYEDSATRPERQNLAKVRKGQFEGMPEKLLEEDWAPDYGDRKIHPTAGVTAVGARMPLVAFNVNLDTDNIDIAHKIAKIIRGSGGGYKYCKAIGVMLEDRHIAQVSMNMVNFEKCSLYRTFETIKFEARRYGVNVIGSEVIGLAPAKALIDVAEYYLQVEDFDYHKQILENHLLG.

The active-site For formimidoyltransferase activity is the His82. 163–172 (GDRKIHPTAG) contacts folate.

The protein belongs to the formiminotransferase family.

It is found in the cytoplasm. It catalyses the reaction (6S)-5-formyl-5,6,7,8-tetrahydrofolate + L-glutamate = N-formyl-L-glutamate + (6S)-5,6,7,8-tetrahydrofolate + H(+). The catalysed reaction is 5-formimidoyltetrahydrofolate + L-glutamate = N-formimidoyl-L-glutamate + (6S)-5,6,7,8-tetrahydrofolate. It carries out the reaction (6S)-5-formyl-5,6,7,8-tetrahydrofolate + ATP = (6R)-5,10-methenyltetrahydrofolate + ADP + phosphate. Its pathway is amino-acid degradation; L-histidine degradation into L-glutamate; L-glutamate from N-formimidoyl-L-glutamate (transferase route): step 1/1. It participates in one-carbon metabolism; tetrahydrofolate interconversion. Its function is as follows. Catalyzes the transfer of the formyl group from N-formylglutamate to tetrahydrofolate (THF) to yield 5-formyltetrahydrofolate (5-CHO-THF) and glutamate (Glu). The triglutamate form of 5-CHO-THF (5-CHO-THF-Glu3) can also be used as substrate. It can also catalyze the transfer of the formimino group from N-formiminoglutamate to tetrahydrofolate (THF) to yield 5-formiminotetrahydrofolate (5-NH=CH-THF) and glutamate (Glu). It can replace YgfA to catalyze the irreversible ATP-dependent transformation of 5-CHO-THF to form 5,10-methenyltetrahydrofolate (5,10-CH=THF). The chain is Glutamate formimidoyltransferase from Streptococcus pyogenes serotype M1.